The sequence spans 172 residues: Translation initiation factor IF-3 (172 aa).

The protein belongs to the IF-3 family. Monomer.

The protein resides in the cytoplasm. Functionally, IF-3 binds to the 30S ribosomal subunit and shifts the equilibrium between 70S ribosomes and their 50S and 30S subunits in favor of the free subunits, thus enhancing the availability of 30S subunits on which protein synthesis initiation begins. The chain is Translation initiation factor IF-3 from Sulfurimonas denitrificans (strain ATCC 33889 / DSM 1251) (Thiomicrospira denitrificans (strain ATCC 33889 / DSM 1251)).